The primary structure comprises 91 residues: Putative defective replication initiation protein (91 aa).

In Escherichia coli (strain K12), this protein is Putative defective replication initiation protein (repA1).